Consider the following 67-residue polypeptide: Large ribosomal subunit protein uL29 (67 aa).

It belongs to the universal ribosomal protein uL29 family.

In Wolbachia pipientis subsp. Culex pipiens (strain wPip), this protein is Large ribosomal subunit protein uL29.